The sequence spans 329 residues: Glyceraldehyde-3-phosphate dehydrogenase 1 (329 aa).

NAD(+)-binding positions include 11 to 12 (RI), Asp33, and Glu77. Ser148 is modified (phosphoserine). Residue 148-150 (SCT) coordinates D-glyceraldehyde 3-phosphate. Cys149 serves as the catalytic Nucleophile. Residue Ser177 is modified to Phosphoserine. Residue Thr179 participates in D-glyceraldehyde 3-phosphate binding. A Phosphoserine modification is found at Ser200. Residues 208–209 (TG) and Arg231 contribute to the D-glyceraldehyde 3-phosphate site. An NAD(+)-binding site is contributed by Asn313.

It belongs to the glyceraldehyde-3-phosphate dehydrogenase family. Homotetramer.

The protein localises to the cytoplasm. The enzyme catalyses D-glyceraldehyde 3-phosphate + phosphate + NAD(+) = (2R)-3-phospho-glyceroyl phosphate + NADH + H(+). The protein operates within carbohydrate degradation; glycolysis; pyruvate from D-glyceraldehyde 3-phosphate: step 1/5. In Kluyveromyces marxianus (Yeast), this protein is Glyceraldehyde-3-phosphate dehydrogenase 1.